A 222-amino-acid polypeptide reads, in one-letter code: Nucleoside triphosphate pyrophosphatase (222 aa).

Residue D82 is the Proton acceptor of the active site.

This sequence belongs to the Maf family. Requires a divalent metal cation as cofactor.

The protein resides in the cytoplasm. The catalysed reaction is a ribonucleoside 5'-triphosphate + H2O = a ribonucleoside 5'-phosphate + diphosphate + H(+). It catalyses the reaction a 2'-deoxyribonucleoside 5'-triphosphate + H2O = a 2'-deoxyribonucleoside 5'-phosphate + diphosphate + H(+). In terms of biological role, nucleoside triphosphate pyrophosphatase. May have a dual role in cell division arrest and in preventing the incorporation of modified nucleotides into cellular nucleic acids. The protein is Nucleoside triphosphate pyrophosphatase of Mycobacterium bovis (strain ATCC BAA-935 / AF2122/97).